The sequence spans 202 residues: dTTP/UTP pyrophosphatase (202 aa).

Residue Asp80 is the Proton acceptor of the active site.

Belongs to the Maf family. YhdE subfamily. A divalent metal cation serves as cofactor.

The protein resides in the cytoplasm. The enzyme catalyses dTTP + H2O = dTMP + diphosphate + H(+). It carries out the reaction UTP + H2O = UMP + diphosphate + H(+). Nucleoside triphosphate pyrophosphatase that hydrolyzes dTTP and UTP. May have a dual role in cell division arrest and in preventing the incorporation of modified nucleotides into cellular nucleic acids. This chain is dTTP/UTP pyrophosphatase, found in Alkalilimnicola ehrlichii (strain ATCC BAA-1101 / DSM 17681 / MLHE-1).